Here is a 208-residue protein sequence, read N- to C-terminus: Urease accessory protein UreG (208 aa).

12-19 lines the GTP pocket; sequence GPVGAGKT.

This sequence belongs to the SIMIBI class G3E GTPase family. UreG subfamily. In terms of assembly, homodimer. UreD, UreF and UreG form a complex that acts as a GTP-hydrolysis-dependent molecular chaperone, activating the urease apoprotein by helping to assemble the nickel containing metallocenter of UreC. The UreE protein probably delivers the nickel.

It is found in the cytoplasm. In terms of biological role, facilitates the functional incorporation of the urease nickel metallocenter. This process requires GTP hydrolysis, probably effectuated by UreG. The chain is Urease accessory protein UreG from Rhodobacter capsulatus (Rhodopseudomonas capsulata).